Reading from the N-terminus, the 152-residue chain is Coiled-coil domain-containing protein 182 (152 aa).

Residues 46 to 109 (ADLEILQQKV…RLREEEDRGI (64 aa)) adopt a coiled-coil conformation.

The protein is Coiled-coil domain-containing protein 182 (Ccdc182) of Mus musculus (Mouse).